A 575-amino-acid chain; its full sequence is Proline--tRNA ligase (575 aa).

The protein belongs to the class-II aminoacyl-tRNA synthetase family. ProS type 1 subfamily. Homodimer.

It localises to the cytoplasm. It carries out the reaction tRNA(Pro) + L-proline + ATP = L-prolyl-tRNA(Pro) + AMP + diphosphate. In terms of biological role, catalyzes the attachment of proline to tRNA(Pro) in a two-step reaction: proline is first activated by ATP to form Pro-AMP and then transferred to the acceptor end of tRNA(Pro). As ProRS can inadvertently accommodate and process non-cognate amino acids such as alanine and cysteine, to avoid such errors it has two additional distinct editing activities against alanine. One activity is designated as 'pretransfer' editing and involves the tRNA(Pro)-independent hydrolysis of activated Ala-AMP. The other activity is designated 'posttransfer' editing and involves deacylation of mischarged Ala-tRNA(Pro). The misacylated Cys-tRNA(Pro) is not edited by ProRS. The sequence is that of Proline--tRNA ligase from Saccharophagus degradans (strain 2-40 / ATCC 43961 / DSM 17024).